The sequence spans 270 residues: 4-hydroxy-tetrahydrodipicolinate reductase (270 aa).

Residues 11–16 (GAGGRM) and glutamate 37 each bind NAD(+). Arginine 38 contacts NADP(+). NAD(+)-binding positions include 101–103 (GTT) and 125–128 (APNM). Histidine 158 functions as the Proton donor/acceptor in the catalytic mechanism. Histidine 159 lines the (S)-2,3,4,5-tetrahydrodipicolinate pocket. Lysine 162 serves as the catalytic Proton donor. 168 to 169 (GT) contributes to the (S)-2,3,4,5-tetrahydrodipicolinate binding site.

It belongs to the DapB family.

The protein localises to the cytoplasm. It carries out the reaction (S)-2,3,4,5-tetrahydrodipicolinate + NAD(+) + H2O = (2S,4S)-4-hydroxy-2,3,4,5-tetrahydrodipicolinate + NADH + H(+). The enzyme catalyses (S)-2,3,4,5-tetrahydrodipicolinate + NADP(+) + H2O = (2S,4S)-4-hydroxy-2,3,4,5-tetrahydrodipicolinate + NADPH + H(+). Its pathway is amino-acid biosynthesis; L-lysine biosynthesis via DAP pathway; (S)-tetrahydrodipicolinate from L-aspartate: step 4/4. Catalyzes the conversion of 4-hydroxy-tetrahydrodipicolinate (HTPA) to tetrahydrodipicolinate. This is 4-hydroxy-tetrahydrodipicolinate reductase from Shewanella baltica (strain OS223).